Reading from the N-terminus, the 439-residue chain is Apolipoprotein N-acyltransferase (439 aa).

The next 6 helical transmembrane spans lie at 13 to 33, 47 to 67, 75 to 95, 97 to 117, 149 to 169, and 175 to 195; these read LLAG…FLVF, LFSF…IPLI, FIAY…QFGL, YLLW…YTLV, NAGT…FPLF, and IFSL…ETSY. The 233-residue stretch at 207–439 folds into the CN hydrolase domain; the sequence is IQPFVPQDVK…GSRGILLFSF (233 aa). Residue glutamate 248 is the Proton acceptor of the active site. Lysine 305 is a catalytic residue. The Nucleophile role is filled by cysteine 355.

This sequence belongs to the CN hydrolase family. Apolipoprotein N-acyltransferase subfamily.

Its subcellular location is the cell inner membrane. It catalyses the reaction N-terminal S-1,2-diacyl-sn-glyceryl-L-cysteinyl-[lipoprotein] + a glycerophospholipid = N-acyl-S-1,2-diacyl-sn-glyceryl-L-cysteinyl-[lipoprotein] + a 2-acyl-sn-glycero-3-phospholipid + H(+). It functions in the pathway protein modification; lipoprotein biosynthesis (N-acyl transfer). Catalyzes the phospholipid dependent N-acylation of the N-terminal cysteine of apolipoprotein, the last step in lipoprotein maturation. This Aquifex aeolicus (strain VF5) protein is Apolipoprotein N-acyltransferase.